An 813-amino-acid chain; its full sequence is LPS-assembly protein LptD (813 aa).

The first 22 residues, 1–22, serve as a signal peptide directing secretion; that stretch reads MRRALRLLPLPLSIAICLPAMA.

The protein belongs to the LptD family. Component of the lipopolysaccharide transport and assembly complex. Interacts with LptE and LptA.

The protein resides in the cell outer membrane. Its function is as follows. Together with LptE, is involved in the assembly of lipopolysaccharide (LPS) at the surface of the outer membrane. The polypeptide is LPS-assembly protein LptD (Xanthomonas oryzae pv. oryzae (strain MAFF 311018)).